The following is a 107-amino-acid chain: Ribonuclease P protein component 4 (107 aa).

The Zn(2+) site is built by Cys66, Cys69, Cys92, and Cys95.

The protein belongs to the eukaryotic/archaeal RNase P protein component 4 family. Consists of a catalytic RNA component and at least 4-5 protein subunits. It depends on Zn(2+) as a cofactor.

Its subcellular location is the cytoplasm. It carries out the reaction Endonucleolytic cleavage of RNA, removing 5'-extranucleotides from tRNA precursor.. Part of ribonuclease P, a protein complex that generates mature tRNA molecules by cleaving their 5'-ends. In Methanosarcina barkeri (strain Fusaro / DSM 804), this protein is Ribonuclease P protein component 4.